The primary structure comprises 295 residues: Protein FAM221A (295 aa).

Residues 244–295 (SEPPGIDKQVSSMRLSEEDDMAYFERRYQERLRKEKEHKRQKNSKPPTTQRP) form a disordered region. Positions 266–278 (YFERRYQERLRKE) are enriched in basic and acidic residues.

The protein belongs to the FAM221 family.

This Xenopus laevis (African clawed frog) protein is Protein FAM221A (fam221a).